A 391-amino-acid polypeptide reads, in one-letter code: 8-amino-7-oxononanoate synthase 1 (391 aa).

Residue glycine 108–phenylalanine 109 participates in pyridoxal 5'-phosphate binding. Histidine 133 lines the substrate pocket. Pyridoxal 5'-phosphate is bound by residues serine 180, aspartate 205–histidine 208, and threonine 236–lysine 239. The residue at position 239 (lysine 239) is an N6-(pyridoxal phosphate)lysine. Threonine 353 provides a ligand contact to substrate.

It belongs to the class-II pyridoxal-phosphate-dependent aminotransferase family. BioF subfamily. As to quaternary structure, homodimer. Pyridoxal 5'-phosphate is required as a cofactor.

It catalyses the reaction 6-carboxyhexanoyl-[ACP] + L-alanine + H(+) = (8S)-8-amino-7-oxononanoate + holo-[ACP] + CO2. Its pathway is cofactor biosynthesis; biotin biosynthesis. In terms of biological role, catalyzes the decarboxylative condensation of pimeloyl-[acyl-carrier protein] and L-alanine to produce 8-amino-7-oxononanoate (AON), [acyl-carrier protein], and carbon dioxide. The chain is 8-amino-7-oxononanoate synthase 1 from Bacillus velezensis (strain DSM 23117 / BGSC 10A6 / LMG 26770 / FZB42) (Bacillus amyloliquefaciens subsp. plantarum).